The sequence spans 553 residues: Arginine--tRNA ligase (553 aa).

A 'HIGH' region motif is present at residues 130–140 (ANPTGDLHIGH).

It belongs to the class-I aminoacyl-tRNA synthetase family. In terms of assembly, monomer.

It is found in the cytoplasm. It carries out the reaction tRNA(Arg) + L-arginine + ATP = L-arginyl-tRNA(Arg) + AMP + diphosphate. The sequence is that of Arginine--tRNA ligase from Staphylococcus epidermidis (strain ATCC 35984 / DSM 28319 / BCRC 17069 / CCUG 31568 / BM 3577 / RP62A).